The following is a 197-amino-acid chain: Large ribosomal subunit protein bL25 (197 aa).

This sequence belongs to the bacterial ribosomal protein bL25 family. CTC subfamily. Part of the 50S ribosomal subunit; part of the 5S rRNA/L5/L18/L25 subcomplex. Contacts the 5S rRNA. Binds to the 5S rRNA independently of L5 and L18.

Its function is as follows. This is one of the proteins that binds to the 5S RNA in the ribosome where it forms part of the central protuberance. The sequence is that of Large ribosomal subunit protein bL25 from Pseudomonas putida (strain GB-1).